The sequence spans 659 residues: MAETAKTAVLQEETRIFNTPQWIIEYSNSYQWMKKKGFKTEKEMREWCAQNYLDFWDEMAQTYADWFKPYTQILEWNPPYAKWFLGGKCNVAHNAVDRHAKSWRRNKVAYYFVGEPVGDTKTITYYQLYQAVNKMANGLKSLGVKKGDRVSIYLPMIPELPITMLACAKIGAIHSVVFSGFSAGGLQSRVTDAEAKVVVTSDGFYRRGKPLPLKPNVDEAVQNAPSVEKVVVVKRVGLDVPMKEGRDIWYHDLVKDQPAECYTEELDPEDRLFILYTSGTTGKPKGIEHAHGGFCVGPAYTTAWALDVHEEDVYWCTADCGWITGHSYVVYGPLCLGATSILYEGAPDYPDIGRWWSIIEEYGVSVFYTAPTAIRMFMKAGDQWPKKYNLKSIRILASVGEPLNPEAYVWFRNNIGGGQAPIIDTWWQTETGCHVIAPLPMTPEKPGSVAFPLPGFNTDIYDEDGNSVPLGYGGNIVQKTPWPSMLRAFFRDPERYMKEYWQMYWDIKPGTYLAGDKATRDKDGYWWIQGRIDDVLKVAGHRISNAEVESAAVSHPAVAEAAVIGKPDEVKGEVIVAFIILKEGVQESEDLKKDIAKHVRSVLGPVAYPEIVYFVKDVPKTRSGKIMRRVIKAKALGKPVGDISALANPESVENIPLIV.

CoA-binding positions include Arg206–Lys209 and Thr324. Residues Gly400–Pro402, Asp424–Thr429, Asp516, Arg531, and Arg542 each bind ATP. Positions 553 and 555 each coordinate Mg(2+). Arg600 provides a ligand contact to CoA.

It belongs to the ATP-dependent AMP-binding enzyme family. Mg(2+) serves as cofactor.

It catalyses the reaction acetate + ATP + CoA = acetyl-CoA + AMP + diphosphate. Functionally, catalyzes the conversion of acetate into acetyl-CoA (AcCoA), an essential intermediate at the junction of anabolic and catabolic pathways. AcsA undergoes a two-step reaction. In the first half reaction, AcsA combines acetate with ATP to form acetyl-adenylate (AcAMP) intermediate. In the second half reaction, it can then transfer the acetyl group from AcAMP to the sulfhydryl group of CoA, forming the product AcCoA. The chain is Acetyl-coenzyme A synthetase (acsA) from Methanothrix thermoacetophila (strain DSM 6194 / JCM 14653 / NBRC 101360 / PT) (Methanosaeta thermophila).